Here is a 330-residue protein sequence, read N- to C-terminus: Probable cell division protein WhiA (330 aa).

The segment at residues 275–308 (SLDELGRLSDPPLTKDAIAGRIRRLLAMADRRAE) is a DNA-binding region (H-T-H motif).

The protein belongs to the WhiA family.

Its function is as follows. Involved in cell division and chromosome segregation. The chain is Probable cell division protein WhiA from Kocuria rhizophila (strain ATCC 9341 / DSM 348 / NBRC 103217 / DC2201).